The primary structure comprises 349 residues: Phenylalanine--tRNA ligase alpha subunit (349 aa).

Mg(2+) is bound at residue Glu258.

It belongs to the class-II aminoacyl-tRNA synthetase family. Phe-tRNA synthetase alpha subunit type 1 subfamily. Tetramer of two alpha and two beta subunits. Requires Mg(2+) as cofactor.

It localises to the cytoplasm. The catalysed reaction is tRNA(Phe) + L-phenylalanine + ATP = L-phenylalanyl-tRNA(Phe) + AMP + diphosphate + H(+). This Rickettsia conorii (strain ATCC VR-613 / Malish 7) protein is Phenylalanine--tRNA ligase alpha subunit.